Reading from the N-terminus, the 249-residue chain is Probable transcriptional regulatory protein Psyc_0938 (249 aa).

This sequence belongs to the TACO1 family.

It is found in the cytoplasm. The chain is Probable transcriptional regulatory protein Psyc_0938 from Psychrobacter arcticus (strain DSM 17307 / VKM B-2377 / 273-4).